We begin with the raw amino-acid sequence, 293 residues long: Ribosomal RNA small subunit methyltransferase H (293 aa).

S-adenosyl-L-methionine is bound by residues 32–34 (GGH), Asp51, Phe78, Asp99, and Gln106. Positions 274–293 (DEIRENPASRSAKMRVARRL) are disordered.

The protein belongs to the methyltransferase superfamily. RsmH family.

The protein localises to the cytoplasm. The enzyme catalyses cytidine(1402) in 16S rRNA + S-adenosyl-L-methionine = N(4)-methylcytidine(1402) in 16S rRNA + S-adenosyl-L-homocysteine + H(+). Its function is as follows. Specifically methylates the N4 position of cytidine in position 1402 (C1402) of 16S rRNA. The protein is Ribosomal RNA small subunit methyltransferase H of Sulfurihydrogenibium azorense (strain DSM 15241 / OCM 825 / Az-Fu1).